The chain runs to 183 residues: U3 small nucleolar ribonucleoprotein protein IMP3 (183 aa).

Residues 109 to 175 (RRLPVIMHRL…IKKTLLRYRN (67 aa)) enclose the S4 RNA-binding domain.

It belongs to the universal ribosomal protein uS4 family. Component of a heterotrimeric complex containing IMP3, IMP4 and MPP10. Interacts with MPP10. Component of the ribosomal small subunit (SSU) processome composed of at least 40 protein subunits and snoRNA U3.

The protein localises to the nucleus. Its subcellular location is the nucleolus. Functionally, required for the early cleavages at sites A0, A1 and A2 during 18S ribosomal pre-RNA processing. The chain is U3 small nucleolar ribonucleoprotein protein IMP3 (IMP3) from Saccharomyces cerevisiae (strain ATCC 204508 / S288c) (Baker's yeast).